A 180-amino-acid chain; its full sequence is Large ribosomal subunit protein uL6 (180 aa).

Belongs to the universal ribosomal protein uL6 family. As to quaternary structure, part of the 50S ribosomal subunit.

In terms of biological role, this protein binds to the 23S rRNA, and is important in its secondary structure. It is located near the subunit interface in the base of the L7/L12 stalk, and near the tRNA binding site of the peptidyltransferase center. This is Large ribosomal subunit protein uL6 from Clostridium beijerinckii (strain ATCC 51743 / NCIMB 8052) (Clostridium acetobutylicum).